Reading from the N-terminus, the 1080-residue chain is Carbamoyl phosphate synthase large chain (1080 aa).

The interval 1–403 (MPKRTDLRTI…SLQKAVRGLE (403 aa)) is carboxyphosphate synthetic domain. ATP-binding residues include arginine 129, arginine 169, glycine 175, glycine 176, glutamate 208, valine 210, glutamate 215, glycine 241, valine 242, histidine 243, glutamine 285, and glutamate 299. In terms of domain architecture, ATP-grasp 1 spans 133–328 (RVAMQEIGLE…IAKIAAKLAV (196 aa)). 3 residues coordinate Mg(2+): glutamine 285, glutamate 299, and asparagine 301. Mn(2+)-binding residues include glutamine 285, glutamate 299, and asparagine 301. The segment at 404-554 (TGKVGLEPTG…YSTYEEECEA (151 aa)) is oligomerization domain. The carbamoyl phosphate synthetic domain stretch occupies residues 555–942 (APSDRRKIMI…AFARAQEAGD (388 aa)). One can recognise an ATP-grasp 2 domain in the interval 679-876 (QRLVQQLGLR…LAKIAARCMT (198 aa)). ATP contacts are provided by arginine 715, arginine 754, leucine 756, glutamate 761, glycine 787, valine 788, histidine 789, serine 790, glutamine 830, and glutamate 847. Mg(2+)-binding residues include glutamine 830, glutamate 847, and asparagine 849. Mn(2+)-binding residues include glutamine 830, glutamate 847, and asparagine 849. The MGS-like domain occupies 943-1080 (IRAPQPGRAF…LQELHKELQV (138 aa)). The segment at 943 to 1080 (IRAPQPGRAF…LQELHKELQV (138 aa)) is allosteric domain.

The protein belongs to the CarB family. Composed of two chains; the small (or glutamine) chain promotes the hydrolysis of glutamine to ammonia, which is used by the large (or ammonia) chain to synthesize carbamoyl phosphate. Tetramer of heterodimers (alpha,beta)4. Mg(2+) serves as cofactor. It depends on Mn(2+) as a cofactor.

It carries out the reaction hydrogencarbonate + L-glutamine + 2 ATP + H2O = carbamoyl phosphate + L-glutamate + 2 ADP + phosphate + 2 H(+). The catalysed reaction is hydrogencarbonate + NH4(+) + 2 ATP = carbamoyl phosphate + 2 ADP + phosphate + 2 H(+). Its pathway is amino-acid biosynthesis; L-arginine biosynthesis; carbamoyl phosphate from bicarbonate: step 1/1. The protein operates within pyrimidine metabolism; UMP biosynthesis via de novo pathway; (S)-dihydroorotate from bicarbonate: step 1/3. Its function is as follows. Large subunit of the glutamine-dependent carbamoyl phosphate synthetase (CPSase). CPSase catalyzes the formation of carbamoyl phosphate from the ammonia moiety of glutamine, carbonate, and phosphate donated by ATP, constituting the first step of 2 biosynthetic pathways, one leading to arginine and/or urea and the other to pyrimidine nucleotides. The large subunit (synthetase) binds the substrates ammonia (free or transferred from glutamine from the small subunit), hydrogencarbonate and ATP and carries out an ATP-coupled ligase reaction, activating hydrogencarbonate by forming carboxy phosphate which reacts with ammonia to form carbamoyl phosphate. This is Carbamoyl phosphate synthase large chain from Xylella fastidiosa (strain Temecula1 / ATCC 700964).